The following is a 366-amino-acid chain: Chalcone synthase B (366 aa).

Residue C172 is part of the active site.

Belongs to the thiolase-like superfamily. Chalcone/stilbene synthases family.

The enzyme catalyses (E)-4-coumaroyl-CoA + 3 malonyl-CoA + 3 H(+) = 2',4,4',6'-tetrahydroxychalcone + 3 CO2 + 4 CoA. Its pathway is secondary metabolite biosynthesis; flavonoid biosynthesis. In terms of biological role, the primary product of this enzyme is 4,2',4',6'-tetrahydroxychalcone (also termed naringenin-chalcone or chalcone) which can under specific conditions spontaneously isomerize into naringenin. The chain is Chalcone synthase B (CHSB) from Ipomoea trifida (Morning glory).